A 374-amino-acid chain; its full sequence is Ribosomal RNA large subunit methyltransferase G (374 aa).

The protein belongs to the methyltransferase superfamily. RlmG family.

Its subcellular location is the cytoplasm. The catalysed reaction is guanosine(1835) in 23S rRNA + S-adenosyl-L-methionine = N(2)-methylguanosine(1835) in 23S rRNA + S-adenosyl-L-homocysteine + H(+). In terms of biological role, specifically methylates the guanine in position 1835 (m2G1835) of 23S rRNA. This chain is Ribosomal RNA large subunit methyltransferase G, found in Pseudomonas syringae pv. tomato (strain ATCC BAA-871 / DC3000).